The following is an 84-amino-acid chain: Transcription elongation factor 1 homolog (84 aa).

The Zn(2+) site is built by Cys-26, Cys-29, Cys-50, and Cys-53.

Belongs to the ELOF1 family.

It is found in the nucleus. In terms of biological role, transcription elongation factor implicated in the maintenance of proper chromatin structure in actively transcribed regions. This Caenorhabditis elegans protein is Transcription elongation factor 1 homolog.